Consider the following 340-residue polypeptide: Nesprin-4 (340 aa).

Disordered stretches follow at residues 1–86 (MAQF…DGGK) and 254–277 (HRRR…DAML). Residues 1–291 (MAQFPLLGHG…GVPAPASRRP (291 aa)) are Cytoplasmic-facing. Residues 53 to 63 (APEHFMDEPKS) are compositionally biased toward basic and acidic residues. The KASH domain maps to 283–340 (VPAPASRRPLTFLLLLLFLLLVGATLLLPLSGVPCCSHTRLARTPYLVLSYVNGLPPI). Residues 292-312 (LTFLLLLLFLLLVGATLLLPL) form a helical; Anchor for type IV membrane protein membrane-spanning segment. Topologically, residues 313–340 (SGVPCCSHTRLARTPYLVLSYVNGLPPI) are perinuclear space.

It belongs to the nesprin family. In terms of assembly, core component of LINC complexes which are composed of inner nuclear membrane SUN domain-containing proteins coupled to outer nuclear membrane KASH domain-containing nesprins. SUN and KASH domain-containing proteins seem to bind each other promiscuously; however, differentially expression of LINC complex constituents can give rise to specific assemblies. Probably part of a SUN1-containing LINC complex. Interacts with kinesins KIF5B and KLC1.

It is found in the nucleus outer membrane. In terms of biological role, as a component of the LINC (LInker of Nucleoskeleton and Cytoskeleton) complex, involved in the connection between the nuclear lamina and the cytoskeleton. The nucleocytoplasmic interactions established by the LINC complex play an important role in the transmission of mechanical forces across the nuclear envelope and in nuclear movement and positioning. Behaves as a kinesin cargo, providing a functional binding site for kinesin-1 at the nuclear envelope. Hence may contribute to the establishment of secretory epithelial morphology, by promoting kinesin-dependent apical migration of the centrosome and Golgi apparatus and basal localization of the nucleus. The sequence is that of Nesprin-4 (Syne4) from Rattus norvegicus (Rat).